We begin with the raw amino-acid sequence, 156 residues long: Small ribosomal subunit protein eS10 (156 aa).

Positions 91-156 (LKRQTRPEAA…FGRGRQEQEE (66 aa)) are disordered. The span at 95 to 119 (TRPEAARPRPKEGAPRAQVGEDRAG) shows a compositional bias: basic and acidic residues.

It belongs to the eukaryotic ribosomal protein eS10 family.

It is found in the cytoplasm. This is Small ribosomal subunit protein eS10 (RPS10) from Lumbricus rubellus (Humus earthworm).